We begin with the raw amino-acid sequence, 470 residues long: Cysteine--tRNA ligase (470 aa).

Cys28 provides a ligand contact to Zn(2+). The short motif at 30 to 40 is the 'HIGH' region element; it reads PTVYNYIHIGN. 3 residues coordinate Zn(2+): Cys212, His237, and Glu241. Positions 271 to 275 match the 'KMSKS' region motif; that stretch reads KMSKS. Lys274 provides a ligand contact to ATP.

Belongs to the class-I aminoacyl-tRNA synthetase family. In terms of assembly, monomer. Requires Zn(2+) as cofactor.

Its subcellular location is the cytoplasm. The catalysed reaction is tRNA(Cys) + L-cysteine + ATP = L-cysteinyl-tRNA(Cys) + AMP + diphosphate. This Lactiplantibacillus plantarum (strain ATCC BAA-793 / NCIMB 8826 / WCFS1) (Lactobacillus plantarum) protein is Cysteine--tRNA ligase.